Reading from the N-terminus, the 1020-residue chain is 5'-3' exoribonuclease 3 (1020 aa).

Residues 113-144 (QQRSRRFRSAKDASDAAAEEERLREEFEREGR) are disordered. A compositionally biased stretch (basic and acidic residues) spans 121 to 144 (SAKDASDAAAEEERLREEFEREGR). The CCHC-type zinc-finger motif lies at 262–279 (ERCFLCGQMGHFASNCEG). 2 disordered regions span residues 411-440 (QHQRQAERVKRDKAGKATKRMDDEAPTVQP) and 452-483 (RLASAPTPSPFQSNDGRSAPHQKVRRLSPGSS). The span at 414–433 (RQAERVKRDKAGKATKRMDD) shows a compositional bias: basic and acidic residues. Positions 487-523 (AIVDVENSLESDERENKEELKTKLKELIREKSDAFNS) form a coiled coil. A compositionally biased stretch (low complexity) spans 831-844 (NNHGMHNNHGMHNN). Disordered stretches follow at residues 831-859 (NNHGMHNNHGMHNNQGRQNPPGSVSGRHL), 875-897 (TDRYQTPTDVPAPGYGYNPPQYV), and 911-1020 (PGAQ…RHRY). Composition is skewed to low complexity over residues 911–923 (PGAQGYAQPAPYQ) and 960–972 (GNHQNQHQQQQWH). Positions 1000-1020 (RGRGRGSHHHHDQGGNPRHRY) are enriched in basic residues.

Belongs to the 5'-3' exonuclease family. XRN2/RAT1 subfamily. Expressed in roots, leaves, stems and flowers.

The protein resides in the nucleus. In terms of biological role, possesses 5'-&gt;3' exoribonuclease activity. Acts as an endogenous post-transcriptional gene silencing (PTGS) suppressor. Degrades miRNA-derived loops, excised during miRNA maturation in the nucleus. Required for proper development. Involved in pre-rRNA processing. Involved with XRN2 in the 5'-end exonucleolytic processing of 5.8S and 25S rRNAs. Contributes with XRN2 to polyadenylation-dependent nuclear RNA surveillance. Involved in the degradation of aberrant polyadenylated pre-rRNA through 5'-end processing. The polypeptide is 5'-3' exoribonuclease 3 (Arabidopsis thaliana (Mouse-ear cress)).